We begin with the raw amino-acid sequence, 114 residues long: U5-lycotoxin-Ls1a (114 aa).

The signal sequence occupies residues M1–S20. Positions E21–R45 are excised as a propeptide. 3 disulfides stabilise this stretch: C51-C66, C65-C93, and C77-C91.

This sequence belongs to the neurotoxin 19 (CSTX) family. 04 (U1-Lctx) subfamily. Expressed by the venom gland.

It localises to the secreted. The protein is U5-lycotoxin-Ls1a of Lycosa singoriensis (Wolf spider).